We begin with the raw amino-acid sequence, 452 residues long: UDP-N-acetylmuramoylalanine--D-glutamate ligase (452 aa).

115–121 (GTNGKTT) provides a ligand contact to ATP.

It belongs to the MurCDEF family.

The protein localises to the cytoplasm. It carries out the reaction UDP-N-acetyl-alpha-D-muramoyl-L-alanine + D-glutamate + ATP = UDP-N-acetyl-alpha-D-muramoyl-L-alanyl-D-glutamate + ADP + phosphate + H(+). It participates in cell wall biogenesis; peptidoglycan biosynthesis. Cell wall formation. Catalyzes the addition of glutamate to the nucleotide precursor UDP-N-acetylmuramoyl-L-alanine (UMA). The sequence is that of UDP-N-acetylmuramoylalanine--D-glutamate ligase from Geobacter metallireducens (strain ATCC 53774 / DSM 7210 / GS-15).